We begin with the raw amino-acid sequence, 573 residues long: Methionine--tRNA ligase (573 aa).

A 'HIGH' region motif is present at residues 11–21 (PYINGIKHLGN). Cys143, Cys146, Cys156, and Cys159 together coordinate Zn(2+). The 'KMSKS' region signature appears at 346-350 (QFSTS). Residue Thr349 participates in ATP binding.

The protein belongs to the class-I aminoacyl-tRNA synthetase family. MetG type 1 subfamily. As to quaternary structure, monomer. It depends on Zn(2+) as a cofactor.

The protein localises to the cytoplasm. The enzyme catalyses tRNA(Met) + L-methionine + ATP = L-methionyl-tRNA(Met) + AMP + diphosphate. Functionally, is required not only for elongation of protein synthesis but also for the initiation of all mRNA translation through initiator tRNA(fMet) aminoacylation. In Ruegeria sp. (strain TM1040) (Silicibacter sp.), this protein is Methionine--tRNA ligase.